Consider the following 165-residue polypeptide: MSLPDKAFPVSWDQFHRDARALAWRIAGMNRDWHAIVAITRGGLVPAAIVCRELGIRLIETVCIASYHDYTSQGDMQILKGVSETLLENGGEGVIVVDDLTDTGKTAAIVREMMPKAHFATVYAKPKGRPLIDTFVTEVSQDTWIYFPWDMGFTYQEPIAGDKRG.

5-phospho-alpha-D-ribose 1-diphosphate contacts are provided by residues 41–42 (RG) and 98–106 (DDLTDTGKT). Asp99 provides a ligand contact to Mg(2+). Guanine-binding residues include Asp102 and Ile145. Xanthine-binding residues include Asp102 and Ile145. Residues 102–106 (DTGKT) and 144–145 (WI) each bind GMP.

Belongs to the purine/pyrimidine phosphoribosyltransferase family. XGPT subfamily. In terms of assembly, homotetramer. Mg(2+) is required as a cofactor.

Its subcellular location is the cell inner membrane. The enzyme catalyses GMP + diphosphate = guanine + 5-phospho-alpha-D-ribose 1-diphosphate. It carries out the reaction XMP + diphosphate = xanthine + 5-phospho-alpha-D-ribose 1-diphosphate. The catalysed reaction is IMP + diphosphate = hypoxanthine + 5-phospho-alpha-D-ribose 1-diphosphate. It participates in purine metabolism; GMP biosynthesis via salvage pathway; GMP from guanine: step 1/1. Its pathway is purine metabolism; XMP biosynthesis via salvage pathway; XMP from xanthine: step 1/1. Purine salvage pathway enzyme that catalyzes the transfer of the ribosyl-5-phosphate group from 5-phospho-alpha-D-ribose 1-diphosphate (PRPP) to the N9 position of the 6-oxopurines guanine and xanthine to form the corresponding ribonucleotides GMP (guanosine 5'-monophosphate) and XMP (xanthosine 5'-monophosphate), with the release of PPi. To a lesser extent, also acts on hypoxanthine. The protein is Xanthine-guanine phosphoribosyltransferase of Brucella anthropi (strain ATCC 49188 / DSM 6882 / CCUG 24695 / JCM 21032 / LMG 3331 / NBRC 15819 / NCTC 12168 / Alc 37) (Ochrobactrum anthropi).